The following is a 181-amino-acid chain: Transcriptional repressor NrdR (181 aa).

Residues 3–34 fold into a zinc finger; it reads CLFCQHTYTRVIDSRVSEDGATIRRRRECEAC. Positions 49–139 constitute an ATP-cone domain; it reads PVIIKKDGGR…VYRSFQDVAD (91 aa).

The protein belongs to the NrdR family. Zn(2+) serves as cofactor.

Negatively regulates transcription of bacterial ribonucleotide reductase nrd genes and operons by binding to NrdR-boxes. The chain is Transcriptional repressor NrdR from Xylella fastidiosa (strain 9a5c).